The sequence spans 322 residues: Pilin gene-inverting protein (322 aa).

Its function is as follows. May be the site-specific invertase required for pilin gene inversion. Moraxella can express either a Q or I pilin; the inversion of 2 kb of DNA determines which pilin is expressed. This Moraxella bovis protein is Pilin gene-inverting protein (piv).